A 1264-amino-acid chain; its full sequence is P-type sodium-transporting ATPase4 (1264 aa).

The span at 1–12 (MSSQNNNKQGGQ) shows a compositional bias: polar residues. Residues 1 to 102 (MSSQNNNKQG…INGEKNDDNN (102 aa)) form a disordered region. Composition is skewed to basic and acidic residues over residues 15 to 42 (NNKK…DELN) and 50 to 64 (NDMK…KKNE). The next 8 membrane-spanning stretches (helical) occupy residues 165 to 185 (VWLI…LVAA), 186 to 206 (VASL…IVTL), 359 to 379 (GLIG…AVII), 393 to 413 (FVII…GLPM), 923 to 943 (FVCF…VAIV), 1006 to 1026 (IFEA…CTGF), 1203 to 1223 (CSIS…TSIL), and 1226 to 1246 (TCLL…NLFL).

Belongs to the cation transport ATPase (P-type) (TC 3.A.3) family.

The protein localises to the cell membrane. It carries out the reaction Na(+)(in) + ATP + H2O = Na(+)(out) + ADP + phosphate + H(+). Its activity is regulated as follows. Inhibited by cipargamin and other spiroindolone compounds. Inhibited by 4-cyano-3-methylisoquinoline derivatives MB14 and MB10 but not RK18. Inhibited by (+)-SJ733, a dihydroisoquinolone compound. Functionally, sodium-exporting ATPase. Required for the extrusion of Na(+) from the intraerythrocytic parasites to maintain a low cytosolic concentration of Na(+). The protein is P-type sodium-transporting ATPase4 of Plasmodium falciparum (isolate 3D7).